A 237-amino-acid chain; its full sequence is Fibroblast growth factor 3 (237 aa).

The signal sequence occupies residues 1-21; sequence MVIIWILLLSFISCGPQVSWA. The N-linked (GlcNAc...) asparagine glycan is linked to Asn-83.

It belongs to the heparin-binding growth factors family.

Its function is as follows. Plays an important role in the regulation of embryonic development, cell proliferation, and cell differentiation. The polypeptide is Fibroblast growth factor 3 (fgf3) (Xenopus laevis (African clawed frog)).